A 520-amino-acid polypeptide reads, in one-letter code: 3-phosphoshikimate 1-carboxyvinyltransferase, chloroplastic (520 aa).

The transit peptide at 1-76 (MAQISSMAQG…RISASVATAE (76 aa)) directs the protein to the chloroplast. Residues Lys-99, Ser-100, and Arg-104 each contribute to the 3-phosphoshikimate site. Residue Lys-99 coordinates phosphoenolpyruvate. Residues Gly-177 and Arg-207 each coordinate phosphoenolpyruvate. Residues Ser-254, Ser-255, Gln-256, Ser-282, Asp-407, and Lys-434 each contribute to the 3-phosphoshikimate site. Gln-256 lines the phosphoenolpyruvate pocket. Asp-407 serves as the catalytic Proton acceptor. Phosphoenolpyruvate is bound by residues Arg-438, Arg-480, and Lys-505.

Belongs to the EPSP synthase family.

The protein resides in the plastid. It localises to the chloroplast. The catalysed reaction is 3-phosphoshikimate + phosphoenolpyruvate = 5-O-(1-carboxyvinyl)-3-phosphoshikimate + phosphate. It functions in the pathway metabolic intermediate biosynthesis; chorismate biosynthesis; chorismate from D-erythrose 4-phosphate and phosphoenolpyruvate: step 6/7. Its function is as follows. Catalyzes the transfer of the enolpyruvyl moiety of phosphoenolpyruvate (PEP) to the 5-hydroxyl of shikimate-3-phosphate (S3P) to produce enolpyruvyl shikimate-3-phosphate and inorganic phosphate. This chain is 3-phosphoshikimate 1-carboxyvinyltransferase, chloroplastic, found in Solanum lycopersicum (Tomato).